We begin with the raw amino-acid sequence, 235 residues long: Interleukin-34 (235 aa).

The first 20 residues, 1–20 (MPWGLAWLYCLGILLDVALG), serve as a signal peptide directing secretion. N-linked (GlcNAc...) asparagine glycosylation is present at N100.

This sequence belongs to the IL-34 family. As to quaternary structure, homodimer. Interacts with CSF1R.

It localises to the secreted. Its function is as follows. Cytokine that promotes the proliferation, survival and differentiation of monocytes and macrophages. Promotes the release of pro-inflammatory chemokines, and thereby plays an important role in innate immunity and in inflammatory processes. Plays an important role in the regulation of osteoclast proliferation and differentiation, and in the regulation of bone resorption. Signaling via CSF1R and its downstream effectors stimulates phosphorylation of MAPK1/ERK2 AND MAPK3/ERK1. The chain is Interleukin-34 (Il34) from Mus musculus (Mouse).